A 144-amino-acid polypeptide reads, in one-letter code: Transcriptional regulator MraZ (144 aa).

SpoVT-AbrB domains follow at residues 5 to 50 (TFNH…ALPQ) and 81 to 124 (AHEV…DRAA).

This sequence belongs to the MraZ family. Forms oligomers.

The protein localises to the cytoplasm. The protein resides in the nucleoid. The chain is Transcriptional regulator MraZ from Anaeromyxobacter dehalogenans (strain 2CP-C).